A 94-amino-acid polypeptide reads, in one-letter code: MRTIAILAAILLVALQAQAESLQERADEATTQKQSGEDNQDLAISFAGNGLSALRTSGSQARATCYCRIGHCTILESLSGVCEISGRLYRLCCR.

The first 19 residues, 1 to 19 (MRTIAILAAILLVALQAQA), serve as a signal peptide directing secretion. Cystine bridges form between cysteine 65/cysteine 93, cysteine 67/cysteine 82, and cysteine 72/cysteine 92.

The protein belongs to the alpha-defensin family. Homodimer. Homotetramer. Interacts with B.antracis lef/lethal factor. In terms of processing, glycosylated. Post-translationally, proteolytically cleaved at Arg-62 by trypsin. Both the propeptide form proHD5/HD5(20-94) and HD5(56-94) are cleaved into the lumenal peptide form HD5(63-94) by trypsin. Unprocessed proHD5 exerts antimicrobial activities, but peptide potency is enhanced by peptide processing. Proteolytically cleaved in duodenal fluid; derived fragments are antimicrobially active against commensal bacteria (in vitro).

It is found in the secreted. Its subcellular location is the cytoplasmic vesicle. The protein localises to the secretory vesicle. Functionally, host-defense peptide that maintains sterility in the urogenital system. Has antimicrobial activity against a wide range of bacteria, including Gram-negative E.coli, P.aeruginosa and S.typhimurium, and Gram-positive E.aerogenes, S.aureus, B.cereus, E.faecium and L.monocytogenes. Confers resistance to intestinal infection by S.typhimurium. Exhibits antimicrobial activity against enteric commensal bacteria such as B.adolescentis, L.acidophilus, B.breve, L.fermentum, B.longum and S.thermophilus. Binds to bacterial membranes and causes membrane disintegration. Induces the secretion of the chemokine IL-8 by intestinal epithelial cells. Binds to B.antracis lef/lethal factor, a major virulence factor from B.anthracis, and neutralizes its enzymatic activity. The polypeptide is Defensin alpha 5 (DEFA5) (Pan troglodytes (Chimpanzee)).